A 72-amino-acid chain; its full sequence is Gas vesicle protein A (72 aa).

Belongs to the gas vesicle GvpA family. The gas vesicle shell is 2 nm thick and consists of a single layer of this protein. It forms helical ribs nearly perpendicular to the long axis of the vesicle.

The protein localises to the gas vesicle shell. Gas vesicles are hollow, gas filled proteinaceous nanostructures found in some microorganisms. During planktonic growth they allow positioning of the organism at a favorable depth for light or nutrient acquisition. GvpA forms the protein shell. The polypeptide is Gas vesicle protein A (Haloquadratum walsbyi (strain DSM 16790 / HBSQ001)).